The chain runs to 329 residues: MLSLPRLWTHTGPLTLLLLPVAWFFASLVTVRRLAFRRGWLTRVDVGIPVIVVGNITAGGSGKTPLVIWLTNWLREQGHRPGVVSRGYGGKARRCVELGAESTAAEVGDEPLLIHRKTGAPVVVGRDRPAAARVLRARHPEVDIIVSDDGLQHYRLGRALELAVLDAATGFGNGWPLPAGPLREPFRRLHEVDGVVQVVRGGGAWRTYLGLKTWRADYRAGDARRLRAPEERKPLRALAQREWLAATGIGRPEGFFAMLEAHGVRHRPRAFPDHHAFRPDDLPAGGAVLMTEKDAVKCADFAGPDWWAVDLEVVPEAGFVEWLRTRLGS.

Residue 57-64 (TAGGSGKT) participates in ATP binding.

This sequence belongs to the LpxK family.

The enzyme catalyses a lipid A disaccharide + ATP = a lipid IVA + ADP + H(+). It functions in the pathway glycolipid biosynthesis; lipid IV(A) biosynthesis; lipid IV(A) from (3R)-3-hydroxytetradecanoyl-[acyl-carrier-protein] and UDP-N-acetyl-alpha-D-glucosamine: step 6/6. Transfers the gamma-phosphate of ATP to the 4'-position of a tetraacyldisaccharide 1-phosphate intermediate (termed DS-1-P) to form tetraacyldisaccharide 1,4'-bis-phosphate (lipid IVA). The chain is Tetraacyldisaccharide 4'-kinase from Thiobacillus denitrificans (strain ATCC 25259 / T1).